The primary structure comprises 28 residues: Ranatuerin-2B (28 aa).

Cysteine 23 and cysteine 28 are joined by a disulfide.

In terms of tissue distribution, expressed by the skin glands.

It localises to the secreted. Antibacterial activity against Gram-positive bacterium S.aureus and Gram-negative bacterium E.coli. Has activity against C.albicans. The chain is Ranatuerin-2B from Lithobates berlandieri (Rio Grande leopard frog).